The sequence spans 467 residues: Siroheme synthase 2 (467 aa).

Residues 1-204 (MDYLPIFCQL…NDVALAERQI (204 aa)) are precorrin-2 dehydrogenase /sirohydrochlorin ferrochelatase. Residues 22–23 (EI) and 43–44 (CS) each bind NAD(+). At Ser128 the chain carries Phosphoserine. Residues 216–467 (GEVVLVGAGP…EPSQPLAQMA (252 aa)) form a uroporphyrinogen-III C-methyltransferase region. Pro225 is an S-adenosyl-L-methionine binding site. Asp248 acts as the Proton acceptor in catalysis. The active-site Proton donor is Lys270. S-adenosyl-L-methionine is bound by residues 301-303 (GGD), Ile306, 331-332 (TA), Met382, and Gly411.

The protein in the N-terminal section; belongs to the precorrin-2 dehydrogenase / sirohydrochlorin ferrochelatase family. This sequence in the C-terminal section; belongs to the precorrin methyltransferase family.

It carries out the reaction uroporphyrinogen III + 2 S-adenosyl-L-methionine = precorrin-2 + 2 S-adenosyl-L-homocysteine + H(+). The enzyme catalyses precorrin-2 + NAD(+) = sirohydrochlorin + NADH + 2 H(+). The catalysed reaction is siroheme + 2 H(+) = sirohydrochlorin + Fe(2+). Its pathway is cofactor biosynthesis; adenosylcobalamin biosynthesis; precorrin-2 from uroporphyrinogen III: step 1/1. It functions in the pathway cofactor biosynthesis; adenosylcobalamin biosynthesis; sirohydrochlorin from precorrin-2: step 1/1. It participates in porphyrin-containing compound metabolism; siroheme biosynthesis; precorrin-2 from uroporphyrinogen III: step 1/1. The protein operates within porphyrin-containing compound metabolism; siroheme biosynthesis; siroheme from sirohydrochlorin: step 1/1. Its pathway is porphyrin-containing compound metabolism; siroheme biosynthesis; sirohydrochlorin from precorrin-2: step 1/1. Its function is as follows. Multifunctional enzyme that catalyzes the SAM-dependent methylations of uroporphyrinogen III at position C-2 and C-7 to form precorrin-2 via precorrin-1. Then it catalyzes the NAD-dependent ring dehydrogenation of precorrin-2 to yield sirohydrochlorin. Finally, it catalyzes the ferrochelation of sirohydrochlorin to yield siroheme. This chain is Siroheme synthase 2, found in Serratia proteamaculans (strain 568).